Here is a 115-residue protein sequence, read N- to C-terminus: Putative HNH nuclease YajD (115 aa).

In terms of domain architecture, HNH spans 27-75 (CGRCSREFVYSNLRELTVHHIDHDHTNNPEDGSNWELLCLYCHDHEHSK).

The protein belongs to the HNH nuclease family.

The polypeptide is Putative HNH nuclease YajD (yajD) (Salmonella typhi).